Consider the following 151-residue polypeptide: Probable desiccation-related protein LEA14 (151 aa).

Belongs to the LEA type 2 family.

The polypeptide is Probable desiccation-related protein LEA14 (LEA14) (Arabidopsis thaliana (Mouse-ear cress)).